The chain runs to 201 residues: Coiled-coil domain-containing protein 195 (201 aa).

Residues 4–38 (DIQLMRLIQEMRAEIHKLEKENQALRMKLTASSQR) are a coiled coil. Disordered regions lie at residues 28–72 (LRMK…DAAP) and 179–201 (SKNS…IIAE). A compositionally biased stretch (low complexity) spans 179-188 (SKNSSSLKHS). A compositionally biased stretch (polar residues) spans 189 to 201 (PNQATNQLSIIAE).

The protein is Coiled-coil domain-containing protein 195 of Homo sapiens (Human).